Consider the following 314-residue polypeptide: Thioredoxin reductase aclD (314 aa).

Residues 13-16 (GGPA), 35-40 (DSKSYR), H47, and A112 contribute to the FAD site. The cysteines at positions 136 and 139 are disulfide-linked. Residues D281 and 288 to 289 (AA) contribute to the FAD site.

The protein belongs to the class-II pyridine nucleotide-disulfide oxidoreductase family. In terms of assembly, homodimer. The cofactor is FAD.

The protein operates within mycotoxin biosynthesis. In terms of biological role, thioredoxin reductase; part of the gene cluster that mediates the biosynthesis of aspirochlorine (or antibiotic A30641), an unusual halogenated spiro compound with distinctive antifungal properties due to selective inhibition of protein biosynthesis, and which is also active against bacteria, viruses, and murine tumor cells. The non-ribosomal peptide synthetase (NRPS) aclP is responsible the formation of the diketopiperazine (DKP) core from the condensation of 2 phenylalanine residues. One Phe residue is tailored into chlorotyrosine by hydroxylation and chlorination, whereas the second Phe undergoes an unprecedented C-C bond cleavage to be converted into glycine. After formation of the DKP, sulfur is incorporated into the DKP by conjugation with glutathione by aclG, followed by its stepwise degradation to the thiol by aclI, aclJ and aclK, and the dithiol oxidation by aclT. In addition, oxygenases (aclB, aclC, aclL and aclO) and O-methyltransferases (aclM and aclU) act as tailoring enzymes to produce the intermediate dechloroaspirochlorine. Ultimately, chlorination of dechloroaspirochlorine by the halogenase aclH is the last step in the aspirochlorine pathway. This is Thioredoxin reductase aclD from Aspergillus oryzae (strain ATCC 42149 / RIB 40) (Yellow koji mold).